The chain runs to 391 residues: Methyltransferase/ribosomally synthesized type I borosin cyclic peptide precursor cmaMA (391 aa).

Residues 1 to 253 form a methyltransferase domain region; it reads MDATANPKAG…TISTFYLPPK (253 aa). Active-site residues include Arg72, Tyr76, and Tyr98. S-adenosyl-L-methionine is bound by residues Tyr98, His100, Val103, Ala130, Gln172, Ala215, Ser246, and Thr247. Residues 254-373 form a clasp domain region; it reads APSAKVSLNR…AQLSGALKEG (120 aa). The tract at residues 374 to 376 is precursor leader; the sequence is GVP. Residue Leu382 is modified to N-methylleucine. Residues Phe385 and Phe386 each carry the N-methylphenylalanine modification. Ile387 and Ile388 each carry N-methylisoleucine.

In the N-terminal section; belongs to the precorrin methyltransferase family. As to quaternary structure, homodimer. Post-translationally, cmaMA automethylates at Leu-382, Phe-385, Phe-386, Ile-387 and Ile-388 before being processed by the prolyloligopeptidase ledP which likely forms a peptidyl ester upon removal of the follower propeptide, which then undergoes macrocyclization with the N-terminus of the modified core peptide. Peptide backbone alpha-N-methylations change the physicochemical properties of amide bonds to provide structural constraints and other favorable characteristics including biological membrane permeability to peptides.

The protein operates within secondary metabolite biosynthesis. Fusion protein of the methyltransferase cmaM and a type I borosin core peptide; part of the gene cluster that mediates the biosynthesis of a type I borosin, a highly methylated cyclic peptide with potent biological activities. Type I borosins derive from the C-terminus of the fusion protein, and it is the same protein that methylates its own C-terminus using S-adenosyl methionine (SAM). The C-terminus is subsequently cleaved off and macrocyclized by a prolyloligopeptidase to give the final product. This chain is Methyltransferase/ribosomally synthesized type I borosin cyclic peptide precursor cmaMA, found in Coprinopsis marcescibilis (Agaric fungus).